The chain runs to 1123 residues: Mediator of RNA polymerase II transcription subunit 14 (1123 aa).

Residues 450–484 (KQSDASDEQQNNIEPNEESLEDLREDNNEDESEPQ) form a disordered region.

The protein belongs to the Mediator complex subunit 14 family. As to quaternary structure, component of the Mediator complex.

It localises to the nucleus. Functionally, component of the Mediator complex, a coactivator involved in the regulated transcription of nearly all RNA polymerase II-dependent genes. Mediator functions as a bridge to convey information from gene-specific regulatory proteins to the basal RNA polymerase II transcription machinery. Mediator is recruited to promoters by direct interactions with regulatory proteins and serves as a scaffold for the assembly of a functional preinitiation complex with RNA polymerase II and the general transcription factors. The polypeptide is Mediator of RNA polymerase II transcription subunit 14 (RGR1) (Debaryomyces hansenii (strain ATCC 36239 / CBS 767 / BCRC 21394 / JCM 1990 / NBRC 0083 / IGC 2968) (Yeast)).